Here is a 160-residue protein sequence, read N- to C-terminus: MIP18 family protein F45G2.10 (160 aa).

The segment at 1-32 (MGQERLDNANPTLFDSKPRHRPVTGTERDESV) is disordered.

The protein belongs to the MIP18 family.

Functionally, may play a role in chromosome segregation through establishment of sister chromatid cohesion. This Caenorhabditis elegans protein is MIP18 family protein F45G2.10.